Reading from the N-terminus, the 259-residue chain is Ubiquinone/menaquinone biosynthesis C-methyltransferase UbiE (259 aa).

S-adenosyl-L-methionine-binding positions include Thr82, Asp103, 131 to 132 (NA), and Ser148.

Belongs to the class I-like SAM-binding methyltransferase superfamily. MenG/UbiE family.

The catalysed reaction is a 2-demethylmenaquinol + S-adenosyl-L-methionine = a menaquinol + S-adenosyl-L-homocysteine + H(+). The enzyme catalyses a 2-methoxy-6-(all-trans-polyprenyl)benzene-1,4-diol + S-adenosyl-L-methionine = a 5-methoxy-2-methyl-3-(all-trans-polyprenyl)benzene-1,4-diol + S-adenosyl-L-homocysteine + H(+). The protein operates within quinol/quinone metabolism; menaquinone biosynthesis; menaquinol from 1,4-dihydroxy-2-naphthoate: step 2/2. Its pathway is cofactor biosynthesis; ubiquinone biosynthesis. In terms of biological role, methyltransferase required for the conversion of demethylmenaquinol (DMKH2) to menaquinol (MKH2) and the conversion of 2-polyprenyl-6-methoxy-1,4-benzoquinol (DDMQH2) to 2-polyprenyl-3-methyl-6-methoxy-1,4-benzoquinol (DMQH2). This chain is Ubiquinone/menaquinone biosynthesis C-methyltransferase UbiE, found in Haemophilus ducreyi (strain 35000HP / ATCC 700724).